The chain runs to 247 residues: tRNA (guanine-N(1)-)-methyltransferase (247 aa).

S-adenosyl-L-methionine is bound by residues Gly117 and 136–141 (LGDFVL).

This sequence belongs to the RNA methyltransferase TrmD family. In terms of assembly, homodimer.

It localises to the cytoplasm. It carries out the reaction guanosine(37) in tRNA + S-adenosyl-L-methionine = N(1)-methylguanosine(37) in tRNA + S-adenosyl-L-homocysteine + H(+). Functionally, specifically methylates guanosine-37 in various tRNAs. The protein is tRNA (guanine-N(1)-)-methyltransferase of Myxococcus xanthus (strain DK1622).